The chain runs to 147 residues: Alpha-amylase/trypsin inhibitor (147 aa).

An N-terminal signal peptide occupies residues M1 to V21.

It belongs to the protease inhibitor I6 (cereal trypsin/alpha-amylase inhibitor) family. In terms of processing, five disulfide bonds, which are essential for the inhibitor activity, are probably present. As to expression, endosperm.

The protein resides in the secreted. Alpha-amylase/trypsin inhibitor. In Hordeum vulgare (Barley), this protein is Alpha-amylase/trypsin inhibitor.